Reading from the N-terminus, the 357-residue chain is Peptide chain release factor 1 (357 aa).

Residue Gln236 is modified to N5-methylglutamine.

It belongs to the prokaryotic/mitochondrial release factor family. Methylated by PrmC. Methylation increases the termination efficiency of RF1.

It localises to the cytoplasm. Functionally, peptide chain release factor 1 directs the termination of translation in response to the peptide chain termination codons UAG and UAA. The sequence is that of Peptide chain release factor 1 from Mycobacterium marinum (strain ATCC BAA-535 / M).